We begin with the raw amino-acid sequence, 211 residues long: Arginine exporter protein ArgO (211 aa).

The next 6 membrane-spanning stretches (helical) occupy residues Met1–Pro21, Leu37–Gly57, Leu68–Leu88, Ile111–Val131, Trp147–Ala167, and Ala179–Ala199.

Belongs to the LysE/ArgO transporter (TC 2.A.75) family.

Its subcellular location is the cell inner membrane. It carries out the reaction L-arginine(in) = L-arginine(out). Functionally, involved in the export of arginine. Important to control the intracellular level of arginine and the correct balance between arginine and lysine. This chain is Arginine exporter protein ArgO, found in Salmonella schwarzengrund (strain CVM19633).